Reading from the N-terminus, the 93-residue chain is Acylphosphatase (93 aa).

Residues 6 to 93 (RAIVTVKGLV…GEFDTFDVRY (88 aa)) form the Acylphosphatase-like domain. Active-site residues include Arg-21 and Asn-39.

It belongs to the acylphosphatase family.

It carries out the reaction an acyl phosphate + H2O = a carboxylate + phosphate + H(+). This is Acylphosphatase (acyP) from Geobacter metallireducens (strain ATCC 53774 / DSM 7210 / GS-15).